The chain runs to 714 residues: ATP-dependent DNA helicase DinG (714 aa).

Positions 17–294 constitute a Helicase ATP-binding domain; the sequence is ALQDQIPDFI…TCMEQFRPKT (278 aa). Residue 54-61 coordinates ATP; sequence APTGVGKT. [4Fe-4S] cluster contacts are provided by Cys-120, Cys-194, Cys-199, and Cys-205. The short motif at 248–251 is the DEAH box element; that stretch reads DEGH. The 182-residue stretch at 517–698 folds into the Helicase C-terminal domain; sequence HIAEMAAYFR…VFPIEQPAVP (182 aa).

The protein belongs to the helicase family. DinG subfamily. Type 1 sub-subfamily. It depends on [4Fe-4S] cluster as a cofactor.

The enzyme catalyses Couples ATP hydrolysis with the unwinding of duplex DNA at the replication fork by translocating in the 5'-3' direction. This creates two antiparallel DNA single strands (ssDNA). The leading ssDNA polymer is the template for DNA polymerase III holoenzyme which synthesizes a continuous strand.. The catalysed reaction is ATP + H2O = ADP + phosphate + H(+). Its function is as follows. DNA-dependent ATPase and 5'-3' DNA helicase. Unwinds D-loops, R-loops, forked DNA and G-quadruplex DNA. This Salmonella typhimurium (strain LT2 / SGSC1412 / ATCC 700720) protein is ATP-dependent DNA helicase DinG.